We begin with the raw amino-acid sequence, 215 residues long: 3-demethoxyubiquinol 3-hydroxylase (215 aa).

Fe cation contacts are provided by Glu64, Glu94, His97, Glu146, Glu178, and His181.

The protein belongs to the COQ7 family. Requires Fe cation as cofactor.

Its subcellular location is the cell membrane. It catalyses the reaction a 5-methoxy-2-methyl-3-(all-trans-polyprenyl)benzene-1,4-diol + AH2 + O2 = a 3-demethylubiquinol + A + H2O. Its pathway is cofactor biosynthesis; ubiquinone biosynthesis. Its function is as follows. Catalyzes the hydroxylation of 2-nonaprenyl-3-methyl-6-methoxy-1,4-benzoquinol during ubiquinone biosynthesis. This is 3-demethoxyubiquinol 3-hydroxylase from Pseudomonas fluorescens (strain SBW25).